Consider the following 302-residue polypeptide: Epoxyqueuosine reductase (302 aa).

The Proton donor role is filled by aspartate 128. Residues 170-202 (LPLQADGPIRDYCGTCTACIDACPTDAITPYEV) enclose the 4Fe-4S ferredoxin-type 1 domain. The [4Fe-4S] cluster site is built by cysteine 182, cysteine 185, cysteine 188, cysteine 192, cysteine 207, cysteine 234, cysteine 237, and cysteine 241. Residues 221–251 (NEFKGKMENWIFGCDICQDVCPWNSFARPHS) enclose the 4Fe-4S ferredoxin-type 2 domain.

It belongs to the QueG family. Monomer. Cob(II)alamin is required as a cofactor. Requires [4Fe-4S] cluster as cofactor.

It is found in the cytoplasm. It carries out the reaction epoxyqueuosine(34) in tRNA + AH2 = queuosine(34) in tRNA + A + H2O. It participates in tRNA modification; tRNA-queuosine biosynthesis. Catalyzes the conversion of epoxyqueuosine (oQ) to queuosine (Q), which is a hypermodified base found in the wobble positions of tRNA(Asp), tRNA(Asn), tRNA(His) and tRNA(Tyr). This is Epoxyqueuosine reductase from Leadbetterella byssophila (strain DSM 17132 / JCM 16389 / KACC 11308 / NBRC 106382 / 4M15).